The sequence spans 327 residues: Zinc transport protein ZntB (327 aa).

The Cytoplasmic segment spans residues 1–271 (MDVVAGKALQ…AMNRRTYTMS (271 aa)). Residues 272–292 (LLAMVFLPTTFLTGLFGVNLG) form a helical membrane-spanning segment. Topologically, residues 293–300 (GIPGNTDS) are periplasmic. The helical transmembrane segment at 301–321 (FGFATFCMMLVVLVLGVAWWL) threads the bilayer. The Cytoplasmic portion of the chain corresponds to 322–327 (KHSKWL).

This sequence belongs to the CorA metal ion transporter (MIT) (TC 1.A.35) family.

It is found in the cell inner membrane. The enzyme catalyses Zn(2+)(out) + H(+)(out) = Zn(2+)(in) + H(+)(in). In terms of biological role, zinc transporter. Acts as a Zn(2+):proton symporter, which likely mediates zinc ion uptake. In Yersinia enterocolitica serotype O:8 / biotype 1B (strain NCTC 13174 / 8081), this protein is Zinc transport protein ZntB.